The primary structure comprises 444 residues: Tubulin beta-6 chain (444 aa).

GTP contacts are provided by Q11, E69, S138, G142, T143, G144, N204, and N226. A Mg(2+)-binding site is contributed by E69.

The protein belongs to the tubulin family. In terms of assembly, dimer of alpha and beta chains. A typical microtubule is a hollow water-filled tube with an outer diameter of 25 nm and an inner diameter of 15 nM. Alpha-beta heterodimers associate head-to-tail to form protofilaments running lengthwise along the microtubule wall with the beta-tubulin subunit facing the microtubule plus end conferring a structural polarity. Microtubules usually have 13 protofilaments but different protofilament numbers can be found in some organisms and specialized cells. Requires Mg(2+) as cofactor. Expressed in roots, leaf sheaths, anthers, and suspension cultured cells.

The protein resides in the cytoplasm. The protein localises to the cytoskeleton. Tubulin is the major constituent of microtubules, a cylinder consisting of laterally associated linear protofilaments composed of alpha- and beta-tubulin heterodimers. Microtubules grow by the addition of GTP-tubulin dimers to the microtubule end, where a stabilizing cap forms. Below the cap, tubulin dimers are in GDP-bound state, owing to GTPase activity of alpha-tubulin. In Oryza sativa subsp. japonica (Rice), this protein is Tubulin beta-6 chain (TUBB6).